Reading from the N-terminus, the 361-residue chain is Methyltransferase LUC1 (361 aa).

S-adenosyl-L-homocysteine is bound by residues Tyr18, Asn66, Asp89, Ser126, and Phe127. Positions 156 and 233 each coordinate Mg(2+).

Belongs to the methyltransferase superfamily. Type-7 methyltransferase family. The cofactor is Mg(2+).

It functions in the pathway mycotoxin biosynthesis. Functionally, methyltransferase; part of the gene cluster that mediates the biosynthesis of the mycotoxin lucilactaene and the lucilactaene-related compound NG-391 that act as cell cycle inhibitors with potent growth inhibitory activity against malarial parasites, moderate growth inhibitory activity against cancer cells, and no activity against bacteria and fungi. LUC1 performs the last step of the pathway and methylates the hydroxyl group of demethyllucilactaene at C-21 to yeald lucilactaene. The pathway begins with the hybrid PKS-NRPS synthetase LUC5 which is responsible for the condensation of one acetyl-coenzyme A (CoA) unit with six malonyl-CoA units and the amide linkage of the arising heptaketide and homoserine, subsequently releasing the first intermediate prelucilactaene B. Both the cytochrome P450 monooxygenase LUC2 and the hydrolase LUC6 function in parallel in modification of prelucilactaene B. LUC6 may catalyze the 2-pyrrolidone ring formation to form prelucilactaene C from prelucilactaene B, followed by C-15 hydroxylation by the same enzyme to give prelucilactaene D, which is then converted to prelucilactaene E by epoxidation, and finally to prelucilactaene F by cyclization. Prelucilactane D, prelucilactaene E, and prelucilactaene F can be converted to dihydrolucilactaene, NG391, and lucilactaene, respectively, via C-20 methyl group hydroxylation by the cytochrome P450 monooxygenase LUC2. However, LUC2, unlike FUS8 in fusarin C biosynthesis, is not enough for the full oxidation of the C-20 methyl group into carboxylic acid, which is a prerequisite for the final methylation step. The aldehyde dehydrogenase LUC3 is involved in the biosynthesis by further oxidation of the C-20 alcoholic analog prelucilactaene G into a carboxylic derivative. This unidentified carboxylic derivative may be converted to demethyllucilactaene. As the last step, the methyltransferase LUC1 methylates the hydroxyl group at C-21 of demethyllucilactaene to generate lucilactaene. The polypeptide is Methyltransferase LUC1 (Fusarium sp).